We begin with the raw amino-acid sequence, 523 residues long: Ribonuclease Y (523 aa).

The helical transmembrane segment at 18 to 38 (WSLTVALVIGGALGFLVVWAF) threads the bilayer. The KH domain maps to 213–276 (TSTIVSLPNE…EVARGALEAL (64 aa)). Positions 339 to 432 (VLDHSVETAS…VILADTISAT (94 aa)) constitute an HD domain.

It belongs to the RNase Y family.

The protein localises to the cell membrane. In terms of biological role, endoribonuclease that initiates mRNA decay. The polypeptide is Ribonuclease Y (Opitutus terrae (strain DSM 11246 / JCM 15787 / PB90-1)).